The chain runs to 369 residues: D-alanine--D-alanine ligase (369 aa).

In terms of domain architecture, ATP-grasp spans 152–359; it reads KKLFAAEGLP…YPSLLATMVE (208 aa). ATP is bound at residue 180–235; that stretch reads RERLGLPVFVKPARGGSSIGVSRVSSWDELDAAVAAARDHDPKVIVEAAIAGRELE. Mg(2+)-binding residues include D314, E326, and N328.

This sequence belongs to the D-alanine--D-alanine ligase family. Requires Mg(2+) as cofactor. It depends on Mn(2+) as a cofactor.

It localises to the cytoplasm. It catalyses the reaction 2 D-alanine + ATP = D-alanyl-D-alanine + ADP + phosphate + H(+). It participates in cell wall biogenesis; peptidoglycan biosynthesis. Functionally, cell wall formation. This Mycobacterium avium (strain 104) protein is D-alanine--D-alanine ligase.